The following is a 553-amino-acid chain: Neutral amino acid transporter B(0) (553 aa).

Met1 carries the N-acetylmethionine modification. At 1-50 (MAVDPPKADPKGVAVDSSRRCPALGSREDQSAKAGGCCGSRDRVRRCIRA) the chain is on the cytoplasmic side. Residues 51–80 (NLLVLLTVAAVVAGVGLGLGVSAAGGADAL) form a helical membrane-spanning segment. Over 81–93 (GPARLTRFAFPGE) the chain is Extracellular. The helical transmembrane segment at 94–115 (LLLRLLKMIILPLVVCSLIGGA) threads the bilayer. Residues 116-129 (ASLDPSALGRVGAW) lie on the Cytoplasmic side of the membrane. The chain crosses the membrane as a helical span at residues 130–152 (ALLFFLVTTLLASALGVGLALAL). The Extracellular segment spans residues 153 to 236 (KPGAAVTAIT…INSTMVQLLC (84 aa)). Residues Asn165 and Asn228 are each glycosylated (N-linked (GlcNAc...) asparagine). The chain crosses the membrane as a helical span at residues 237-260 (EVEGMNILGLVVFAIVFGVALRKL). Residues 261-269 (GPEGELLIR) are Cytoplasmic-facing. Residues 270–297 (FFNSFNDATMVLVSWIMWYAPVGILFLV) form a helical membrane-spanning segment. Topologically, residues 298–318 (ASKIVEMKDVRQLFISLGKYI) are extracellular. The chain crosses the membrane as a helical span at residues 319–340 (LCCLLGHAIHGLLVLPLIYFLF). Over 341–345 (TRKNP) the chain is Cytoplasmic. An intramembrane region (discontinuously helical) is located at residues 346–376 (YRFLWGIMTPLATAFGTSSSSATLPLMMKCV). Topologically, residues 377–385 (EEKNGVAKH) are cytoplasmic. Residues 386-412 (ISRFILPIGATVNMDGAALFQCVAAVF) traverse the membrane as a helical segment. The Na(+) site is built by Gly394, Thr396, and Asn398. At 413 to 425 (IAQLNGVSLDFVK) the chain is on the extracellular side. The discontinuously helical intramembrane region spans 426-459 (IITILVTATASSVGAAGIPAGGVLTLAIILEAVS). The Extracellular portion of the chain corresponds to 460 to 472 (LPVKDISLILAVD). A helical membrane pass occupies residues 473–494 (WLVDRSCTVLNVEGDAFGAGLL). Positions 483 and 487 each coordinate Na(+). Over 495-553 (QSYVDRTKMPSSEPELIQVKNEVSLNPLPLATEEGNPLLKQYQGPTGDSSATFEKESVM) the chain is Cytoplasmic. Ser505, Ser506, Ser518, Ser543, and Ser551 each carry phosphoserine. The tract at residues 531 to 553 (PLLKQYQGPTGDSSATFEKESVM) is disordered. Residues 537-546 (QGPTGDSSAT) are compositionally biased toward polar residues.

Belongs to the dicarboxylate/amino acid:cation symporter (DAACS) (TC 2.A.23) family. SLC1A5 subfamily. In terms of assembly, homotrimer. Highly expressed in adipose tissue. Detected in lung, skeletal muscle, large intestine, kidney and testis. Expressed in lung, brain, kidney and neural retina (at protein level). Expressed in Mueller cells (at protein level).

It is found in the cell membrane. It localises to the melanosome. It catalyses the reaction L-glutamine(out) + L-serine(in) + Na(+)(out) = L-glutamine(in) + L-serine(out) + Na(+)(in). The catalysed reaction is L-glutamine(in) + L-serine(out) + Na(+)(out) = L-glutamine(out) + L-serine(in) + Na(+)(in). The enzyme catalyses L-threonine(in) + L-glutamine(out) + Na(+)(out) = L-threonine(out) + L-glutamine(in) + Na(+)(in). It carries out the reaction L-threonine(out) + L-glutamine(in) + Na(+)(out) = L-threonine(in) + L-glutamine(out) + Na(+)(in). It catalyses the reaction L-asparagine(in) + L-glutamine(out) + Na(+)(out) = L-asparagine(out) + L-glutamine(in) + Na(+)(in). The catalysed reaction is L-asparagine(out) + L-glutamine(in) + Na(+)(out) = L-asparagine(in) + L-glutamine(out) + Na(+)(in). The enzyme catalyses L-glutamine(in) + L-alanine(out) + Na(+)(out) = L-glutamine(out) + L-alanine(in) + Na(+)(in). It carries out the reaction L-valine(out) + L-glutamine(in) + Na(+)(out) = L-valine(in) + L-glutamine(out) + Na(+)(in). It catalyses the reaction L-glutamine(in) + L-methionine(out) + Na(+)(out) = L-glutamine(out) + L-methionine(in) + Na(+)(in). The catalysed reaction is L-glutamine(in) + L-glutamate(out) + Na(+)(out) + H(+)(out) = L-glutamine(out) + L-glutamate(in) + Na(+)(in) + H(+)(in). The enzyme catalyses D-serine(in) + L-glutamine(out) + Na(+)(out) = D-serine(out) + L-glutamine(in) + Na(+)(in). It carries out the reaction D-serine(in) + L-alanine(out) + Na(+)(out) = D-serine(out) + L-alanine(in) + Na(+)(in). It catalyses the reaction nitrate(in) = nitrate(out). The catalysed reaction is iodide(out) = iodide(in). The enzyme catalyses thiocyanate(in) = thiocyanate(out). Down-regulated at acidic pH, with the exception of L-glutamate transport which is up-regulated instead. Sodium-coupled antiporter of neutral amino acids. In a tri-substrate transport cycle, exchanges neutral amino acids between the extracellular and intracellular compartments, coupled to the inward cotransport of at least one sodium ion. The preferred substrate is the essential amino acid L-glutamine, a precursor for biosynthesis of proteins, nucleotides and amine sugars as well as an alternative fuel for mitochondrial oxidative phosphorylation. Exchanges L-glutamine with other neutral amino acids such as L-serine, L-threonine and L-asparagine in a bidirectional way. Provides L-glutamine to proliferating stem and activated cells driving the metabolic switch toward cell differentiation. The transport cycle is usually pH-independent, with the exception of L-glutamate. Transports extracellular L-glutamate coupled to the cotransport of one proton and one sodium ion in exchange for intracellular L-glutamine counter-ion. May provide for L-glutamate uptake in glial cells regulating glutamine/glutamate cycle in the nervous system. Can transport D-amino acids. Mediates D-serine release from the retinal glia potentially affecting NMDA receptor function in retinal neurons. Displays sodium- and amino acid-dependent but uncoupled channel-like anion conductance with a preference SCN(-) &gt;&gt; NO3(-) &gt; I(-) &gt; Cl(-). Through binding of the fusogenic protein syncytin-1/ERVW-1 may mediate trophoblasts syncytialization, the spontaneous fusion of their plasma membranes, an essential process in placental development. This chain is Neutral amino acid transporter B(0) (Slc1a5), found in Mus musculus (Mouse).